A 63-amino-acid polypeptide reads, in one-letter code: Large ribosomal subunit protein bL28c (63 aa).

It belongs to the bacterial ribosomal protein bL28 family.

The protein localises to the plastid. The protein resides in the chloroplast. The polypeptide is Large ribosomal subunit protein bL28c (rpl28) (Porphyra purpurea (Red seaweed)).